A 142-amino-acid polypeptide reads, in one-letter code: Hemoglobin subunit alpha (142 aa).

Residues 2–142 form the Globin domain; that stretch reads VLSAADKNNV…VSTVLTSKYR (141 aa). Residue Ser4 is modified to Phosphoserine. N6-succinyllysine occurs at positions 8 and 12. Residue Lys17 is modified to N6-acetyllysine; alternate. Residue Lys17 is modified to N6-succinyllysine; alternate. Tyr25 carries the phosphotyrosine modification. Ser36 is subject to Phosphoserine. At Lys41 the chain carries N6-succinyllysine. Ser50 bears the Phosphoserine mark. His59 contributes to the O2 binding site. His88 contacts heme b. Phosphothreonine is present on Thr109. Phosphoserine is present on residues Ser125 and Ser132. Residues Thr135 and Thr138 each carry the phosphothreonine modification. The residue at position 139 (Ser139) is a Phosphoserine.

It belongs to the globin family. In terms of assembly, heterotetramer of two alpha chains and two beta chains. In terms of tissue distribution, red blood cells.

Functionally, involved in oxygen transport from the lung to the various peripheral tissues. Hemopressin acts as an antagonist peptide of the cannabinoid receptor CNR1. Hemopressin-binding efficiently blocks cannabinoid receptor CNR1 and subsequent signaling. The sequence is that of Hemoglobin subunit alpha (HBA) from Cavia porcellus (Guinea pig).